Consider the following 215-residue polypeptide: MPAQRGGALSMGAAGFWILVLSITSALADSNNQGNSEPCGPPGPPGPPGIPGFPGAPGALGPPGPPGVPGIPGPQGPPGDVEKCSSRPKSAFAVKLSERPPEPFQPIVFKEALYNQEGHFNMATGEFSCVLPGVYNFGFDIRLFQSSVKIRLMRDGIQVREKEAQANDSYKHAMGSVIMALGKGDKVWLESKLKGTESEKGITHIVFFGYLLYGK.

Residues 1 to 28 form the signal peptide; that stretch reads MPAQRGGALSMGAAGFWILVLSITSALA. The segment at 29–96 is disordered; the sequence is DSNNQGNSEP…RPKSAFAVKL (68 aa). Composition is skewed to pro residues over residues 39–51 and 60–77; these read CGPP…PGIP and LGPP…PQGP. The Collagen-like domain occupies 40–81; that stretch reads GPPGPPGPPGIPGFPGAPGALGPPGPPGVPGIPGPQGPPGDV. The C1q domain occupies 85 to 215; sequence SSRPKSAFAV…VFFGYLLYGK (131 aa). N-linked (GlcNAc...) asparagine glycosylation is present at Asn-167.

As to expression, plasma; synthesized in the liver.

The protein localises to the secreted. Functionally, plasma proteins HP-20, HP-25, HP-27 and HP-55 form a 140 kDa complex via disulfide bonds in the plasma and are hibernation specific. The protein is Hibernation-associated plasma protein HP-25 of Tamias sibiricus (Siberian chipmunk).